The chain runs to 177 residues: Ribosome maturation factor RimM (177 aa).

Residues 98–177 (GEEFYWRELY…RIEVDWDPGF (80 aa)) form the PRC barrel domain.

The protein belongs to the RimM family. Binds ribosomal protein uS19.

The protein localises to the cytoplasm. Functionally, an accessory protein needed during the final step in the assembly of 30S ribosomal subunit, possibly for assembly of the head region. Essential for efficient processing of 16S rRNA. May be needed both before and after RbfA during the maturation of 16S rRNA. It has affinity for free ribosomal 30S subunits but not for 70S ribosomes. This is Ribosome maturation factor RimM from Photobacterium profundum (strain SS9).